A 417-amino-acid polypeptide reads, in one-letter code: NADH-quinone oxidoreductase subunit D 1 (417 aa).

It belongs to the complex I 49 kDa subunit family. NDH-1 is composed of 14 different subunits. Subunits NuoB, C, D, E, F, and G constitute the peripheral sector of the complex.

It localises to the cell membrane. It carries out the reaction a quinone + NADH + 5 H(+)(in) = a quinol + NAD(+) + 4 H(+)(out). NDH-1 shuttles electrons from NADH, via FMN and iron-sulfur (Fe-S) centers, to quinones in the respiratory chain. The immediate electron acceptor for the enzyme in this species is believed to be ubiquinone. Couples the redox reaction to proton translocation (for every two electrons transferred, four hydrogen ions are translocated across the cytoplasmic membrane), and thus conserves the redox energy in a proton gradient. The sequence is that of NADH-quinone oxidoreductase subunit D 1 from Roseiflexus castenholzii (strain DSM 13941 / HLO8).